A 152-amino-acid chain; its full sequence is Transcriptional repressor NrdR (152 aa).

Residues 3 to 34 fold into a zinc finger; the sequence is CPYCQHPDSDVIDTRKLHNGETIRRRRKCEAC. One can recognise an ATP-cone domain in the interval 49–139; that stretch reads ITVVKKNGER…VYRSFADIGK (91 aa).

The protein belongs to the NrdR family. The cofactor is Zn(2+).

Its function is as follows. Negatively regulates transcription of bacterial ribonucleotide reductase nrd genes and operons by binding to NrdR-boxes. This Roseiflexus castenholzii (strain DSM 13941 / HLO8) protein is Transcriptional repressor NrdR.